Here is a 178-residue protein sequence, read N- to C-terminus: ATP synthase subunit delta (178 aa).

The protein belongs to the ATPase delta chain family. As to quaternary structure, F-type ATPases have 2 components, F(1) - the catalytic core - and F(0) - the membrane proton channel. F(1) has five subunits: alpha(3), beta(3), gamma(1), delta(1), epsilon(1). F(0) has three main subunits: a(1), b(2) and c(10-14). The alpha and beta chains form an alternating ring which encloses part of the gamma chain. F(1) is attached to F(0) by a central stalk formed by the gamma and epsilon chains, while a peripheral stalk is formed by the delta and b chains.

It localises to the cell membrane. In terms of biological role, f(1)F(0) ATP synthase produces ATP from ADP in the presence of a proton or sodium gradient. F-type ATPases consist of two structural domains, F(1) containing the extramembraneous catalytic core and F(0) containing the membrane proton channel, linked together by a central stalk and a peripheral stalk. During catalysis, ATP synthesis in the catalytic domain of F(1) is coupled via a rotary mechanism of the central stalk subunits to proton translocation. This protein is part of the stalk that links CF(0) to CF(1). It either transmits conformational changes from CF(0) to CF(1) or is implicated in proton conduction. This Streptococcus equi subsp. zooepidemicus (strain H70) protein is ATP synthase subunit delta.